We begin with the raw amino-acid sequence, 339 residues long: ADP,ATP carrier protein (339 aa).

Solcar repeat units follow at residues 39-133 (MAFV…IKGL), 145-234 (RFFV…AKGV), and 246-328 (AKWA…IKKF). 5 helical membrane-spanning segments follow: residues 41-70 (FVKD…LLLQ), 110-134 (LANV…KGLF), 144-164 (WRFF…SLLI), 212-232 (VSVQ…DTAK), and 245-265 (FAKW…SYPF). Positions 115 and 127 each coordinate ADP. Arg269 contributes to the ADP binding site. The important for transport activity stretch occupies residues 269 to 274 (RRRLMM). The Nucleotide carrier signature motif motif lies at 269–274 (RRRLMM). The helical transmembrane segment at 305–322 (AWSNVLRGAGGAFVLVLY) threads the bilayer.

Belongs to the mitochondrial carrier (TC 2.A.29) family. In terms of assembly, monomer.

The protein resides in the mitochondrion inner membrane. The enzyme catalyses ADP(in) + ATP(out) = ADP(out) + ATP(in). With respect to regulation, the matrix-open state (m-state) is inhibited by the membrane-permeable bongkrekic acid (BKA). The cytoplasmic-open state (c-state) is inhibited by the membrane-impermeable toxic inhibitor carboxyatractyloside (CATR). Functionally, ADP:ATP antiporter that mediates import of ADP into the mitochondrial matrix for ATP synthesis, and export of ATP out to fuel the cell. Cycles between the cytoplasmic-open state (c-state) and the matrix-open state (m-state): operates by the alternating access mechanism with a single substrate-binding site intermittently exposed to either the cytosolic (c-state) or matrix (m-state) side of the inner mitochondrial membrane. The sequence is that of ADP,ATP carrier protein from Parachlorella kessleri (Green alga).